A 385-amino-acid chain; its full sequence is Cellulase CelDZ1 (385 aa).

The chain crosses the membrane as a helical span at residues I6 to I26. Residues H87, W91 to F92, Y118, and H153 each bind substrate. E192 functions as the Proton donor in the catalytic mechanism. Y261 provides a ligand contact to substrate. The active-site Nucleophile is E294. Substrate contacts are provided by residues A300 to S301, W328, and K333 to E335.

This sequence belongs to the glycosyl hydrolase 5 (cellulase A) family. In terms of assembly, monomer.

It localises to the cell membrane. It carries out the reaction Endohydrolysis of (1-&gt;4)-beta-D-glucosidic linkages in cellulose, lichenin and cereal beta-D-glucans.. Activity is enhanced by 1mM Mn(2+), but is not affected by 1mM Ca(2+), Mg(2+), Zn(2+), K(+), Na(+) or Li(+). Activity is not inhibited by EDTA (in vitro). Functionally, thermostable endoglucanase that has high activity with soluble polymeric substrates containing beta-1,4-glycosidic bonds, such as carboxymethyl cellulose (CMC) and barley beta-D-glucan (in vitro). Has no activity with cellobiose and filter paper. Has no activity with substrates containing beta-1,3-linked glycans, such as laminarin. Likewise, lacks activity with xylan, galactomannan and pectin. The polypeptide is Cellulase CelDZ1 (Thermoanaerobacterium sp).